The sequence spans 423 residues: MASALEQFVNSVRQLSAQGQMTQLCELINKSGELLAKNLSHLDTVLGALDVQEHSLGVLAVLFVKFSMPSVPDFETLFSQVQLFISTCNGEHIRYATDTFAGLCHQLTNALVERKQPLRGIGILKQAIDKMQMNTNQLTSVHADLCQLCLLAKCFKPALPYLDVDMMDICKENGAYDAKHFLCYYYYGGMIYTGLKNFERALYFYEQAITTPAMAVSHIMLESYKKYILVSLILLGKVQQLPKYTSQIVGRFIKPLSNAYHELAQVYSTNNPSELRNLVNKHSETFTRDNNMGLVKQCLSSLYKKNIQRLTKTFLTLSLQDMASRVQLSGPQEAEKYVLHMIEDGEIFASINQKDGMVSFHDNPEKYNNPAMLHNIDQEMLKCIELDERLKAMDQEITVNPQFVQKSMGSQEDDSGNKPSSYS.

The residue at position 2 (A2) is an N-acetylalanine. Residues 197–365 (NFERALYFYE…GMVSFHDNPE (169 aa)) enclose the PCI domain. The interval 402–423 (QFVQKSMGSQEDDSGNKPSSYS) is disordered. 3 positions are modified to phosphoserine: S407, S410, and S423.

This sequence belongs to the CSN3 family. Component of the CSN complex, composed of COPS1/GPS1, COPS2, COPS3, COPS4, COPS5, COPS6, COPS7 (COPS7A or COPS7B), COPS8 and COPS9. In the complex, it probably interacts directly with COPS1, COPS4, COPS8 and COPS9. Interacts with CK2 and PKD. Interacts with the translation initiation factor EIF3S6 and IKBKG. Interacts with ERCC6.

It localises to the cytoplasm. The protein resides in the nucleus. In terms of biological role, component of the COP9 signalosome complex (CSN), a complex involved in various cellular and developmental processes. The CSN complex is an essential regulator of the ubiquitin (Ubl) conjugation pathway by mediating the deneddylation of the cullin subunits of SCF-type E3 ligase complexes, leading to decrease the Ubl ligase activity of SCF-type complexes such as SCF, CSA or DDB2. The complex is also involved in phosphorylation of p53/TP53, c-jun/JUN, IkappaBalpha/NFKBIA, ITPK1 and IRF8/ICSBP, possibly via its association with CK2 and PKD kinases. CSN-dependent phosphorylation of TP53 and JUN promotes and protects degradation by the Ubl system, respectively. Essential to maintain the survival of epiblast cells and thus the development of the postimplantation embryo. The polypeptide is COP9 signalosome complex subunit 3 (Cops3) (Rattus norvegicus (Rat)).